A 245-amino-acid chain; its full sequence is rRNA adenine N-6-methyltransferase (245 aa).

Residues N10, L12, G37, E58, D83, and S100 each coordinate S-adenosyl-L-methionine.

Belongs to the class I-like SAM-binding methyltransferase superfamily. rRNA adenine N(6)-methyltransferase family.

The enzyme catalyses adenosine(2085) in 23S rRNA + 2 S-adenosyl-L-methionine = N(6)-dimethyladenosine(2085) in 23S rRNA + 2 S-adenosyl-L-homocysteine + 2 H(+). This protein produces a dimethylation of the adenine residue at position 2085 in 23S rRNA, resulting in reduced affinity between ribosomes and macrolide-lincosamide-streptogramin B antibiotics. The polypeptide is rRNA adenine N-6-methyltransferase (Streptococcus sanguinis).